A 389-amino-acid polypeptide reads, in one-letter code: S-adenosylmethionine synthase (389 aa).

Residue histidine 16 participates in ATP binding. Aspartate 18 is a Mg(2+) binding site. Glutamate 44 contributes to the K(+) binding site. The L-methionine site is built by glutamate 57 and glutamine 101. Residues 101 to 111 are flexible loop; it reads QSVDIAQGVNE. ATP is bound by residues 168–170, 234–235, aspartate 243, 249–250, alanine 266, and lysine 270; these read DAK, RF, and RK. Aspartate 243 is an L-methionine binding site. Lysine 274 contributes to the L-methionine binding site.

Belongs to the AdoMet synthase family. In terms of assembly, homotetramer; dimer of dimers. It depends on Mg(2+) as a cofactor. The cofactor is K(+).

It localises to the cytoplasm. It carries out the reaction L-methionine + ATP + H2O = S-adenosyl-L-methionine + phosphate + diphosphate. The protein operates within amino-acid biosynthesis; S-adenosyl-L-methionine biosynthesis; S-adenosyl-L-methionine from L-methionine: step 1/1. Functionally, catalyzes the formation of S-adenosylmethionine (AdoMet) from methionine and ATP. The overall synthetic reaction is composed of two sequential steps, AdoMet formation and the subsequent tripolyphosphate hydrolysis which occurs prior to release of AdoMet from the enzyme. The sequence is that of S-adenosylmethionine synthase from Magnetococcus marinus (strain ATCC BAA-1437 / JCM 17883 / MC-1).